Consider the following 360-residue polypeptide: Phospho-N-acetylmuramoyl-pentapeptide-transferase (360 aa).

10 helical membrane passes run 27–47 (IVSL…LIAW), 72–92 (PTMG…MWAY), 94–114 (SNPY…VGFI), 132–152 (WKYF…YSIG), 168–188 (IMPQ…VGTS), 199–219 (GLAI…AWAT), 236–256 (AGEL…FLWF), 263–283 (VFMG…IAVL), 288–308 (FLLV…ILQV), and 338–358 (VIVR…ATLK).

It belongs to the glycosyltransferase 4 family. MraY subfamily. Mg(2+) is required as a cofactor.

It localises to the cell inner membrane. The enzyme catalyses UDP-N-acetyl-alpha-D-muramoyl-L-alanyl-gamma-D-glutamyl-meso-2,6-diaminopimeloyl-D-alanyl-D-alanine + di-trans,octa-cis-undecaprenyl phosphate = di-trans,octa-cis-undecaprenyl diphospho-N-acetyl-alpha-D-muramoyl-L-alanyl-D-glutamyl-meso-2,6-diaminopimeloyl-D-alanyl-D-alanine + UMP. The protein operates within cell wall biogenesis; peptidoglycan biosynthesis. Its function is as follows. Catalyzes the initial step of the lipid cycle reactions in the biosynthesis of the cell wall peptidoglycan: transfers peptidoglycan precursor phospho-MurNAc-pentapeptide from UDP-MurNAc-pentapeptide onto the lipid carrier undecaprenyl phosphate, yielding undecaprenyl-pyrophosphoryl-MurNAc-pentapeptide, known as lipid I. The chain is Phospho-N-acetylmuramoyl-pentapeptide-transferase from Yersinia pseudotuberculosis serotype O:1b (strain IP 31758).